We begin with the raw amino-acid sequence, 918 residues long: MNESNDELTLNNYLPSQVEQKWQKRWDSLRAFSPNPSDNGDPFCIVIPPPNVTGSLHMGHAFNTALIDVIIRFQRLLGKNVLCLPGTDHASIAVQTILEKQLKTEGKNSEDIGREEFLKRAWIWKEQSGGKIISQLKRIGYSVDWERERFTLDEKLNEAVVEAFNILHEKKLIYRGEYLVNWCPASQSAVSDLEVEMQEVNGYLWHFKYPLISDQGQILDKYLEVATTRPETLLGDTALAVNPNDERYKKYIDKKVKVPFVDREIPVISDIHVDKDFGTGCVKVTPAHDPNDFAIGKRNNLKQINIMNKDGTLNINAGKFQDLDRFDARKKIIKELDTLGLLTKIENYKNTVPFSDRGKVPIEPLLSTQWFLKMDNISSSCLKELDSKKPTFIPQRWEKVYKDWLDNINDWCISRQLWWGHQIPAWYVLKQSEDSIDQNTPYVVARNEKEALSKATKEFGSNLQLIRDKDVLDTWFSSGLWPFSTLGWPNINDADFKKWYPNSVLITGFDIIFFWVARMTMMGKTFTNNIPFKDVYIHGLVRDENNKKMSKSSGNGIDPLLLIDKYGSDALRFALLREVAGAGQDIRLDYDRKENTSSTVEASRNFANKLWNATKFVLINKTFSENCSLNESDEKNLELSDKWILSKLNQLNTKVSNLLIEYKLGESAKLLYEFAWNDFCDWYVEFAKQKFNNKETHNRKISEKILIKVLTDVLVMMHPFMPHITEELWHKLQIKPEQILLSLQKWPVLEKKYINSQIDKSFHELFEIIRLIRNLRVELGLKPSQLVPVYLISDNVELTNFLKTLIVDIKTFTKSSEVIICKSKDIDKNNFAQSFSGIIGDLEVYLPFNDFVNLEALKDRLTKDLKKVNSDIETLNKRISNKNFIDKAPKEIVDECFAKLKEGNLQSEIINKKLKLLK.

Residues 50 to 60 (PNVTGSLHMGH) carry the 'HIGH' region motif. The short motif at 548 to 552 (KMSKS) is the 'KMSKS' region element. Lys-551 contributes to the ATP binding site. The stretch at 849–883 (NDFVNLEALKDRLTKDLKKVNSDIETLNKRISNKN) forms a coiled coil.

Belongs to the class-I aminoacyl-tRNA synthetase family. ValS type 1 subfamily. As to quaternary structure, monomer.

Its subcellular location is the cytoplasm. The enzyme catalyses tRNA(Val) + L-valine + ATP = L-valyl-tRNA(Val) + AMP + diphosphate. Catalyzes the attachment of valine to tRNA(Val). As ValRS can inadvertently accommodate and process structurally similar amino acids such as threonine, to avoid such errors, it has a 'posttransfer' editing activity that hydrolyzes mischarged Thr-tRNA(Val) in a tRNA-dependent manner. This Prochlorococcus marinus subsp. pastoris (strain CCMP1986 / NIES-2087 / MED4) protein is Valine--tRNA ligase.